Consider the following 137-residue polypeptide: Large-conductance mechanosensitive channel (137 aa).

3 helical membrane-spanning segments follow: residues 15-35 (IDLA…NSIV), 38-58 (IFMP…MFIQ), and 80-100 (GNFI…FLFV).

It belongs to the MscL family. As to quaternary structure, homopentamer.

The protein localises to the cell inner membrane. Functionally, channel that opens in response to stretch forces in the membrane lipid bilayer. May participate in the regulation of osmotic pressure changes within the cell. This is Large-conductance mechanosensitive channel from Bartonella henselae (strain ATCC 49882 / DSM 28221 / CCUG 30454 / Houston 1) (Rochalimaea henselae).